Reading from the N-terminus, the 2138-residue chain is Conidial yellow pigment biosynthesis polyketide synthase melA (2138 aa).

Residues 8–244 (YLFGDQTADF…TRVPIHGPYH (237 aa)) form an N-terminal acylcarrier protein transacylase domain (SAT) region. A Ketosynthase family 3 (KS3) domain is found at 373–804 (QSKIAIIGLS…GGNTALMVED (432 aa)). Residues Cys545, His680, and His722 each act as for beta-ketoacyl synthase activity in the active site. Residues 910–1229 (FVFTGQGAQY…VSALYMAGIE (320 aa)) form a malonyl-CoA:ACP transacylase (MAT) domain region. Ser999 (for acyl/malonyl transferase activity) is an active-site residue. The interval 1288–1601 (SSAAQRVLET…RKILDMALPP (314 aa)) is product template (PT) domain. The tract at residues 1292–1423 (QRVLETSGDN…CNIKFFDPSP (132 aa)) is N-terminal hotdog fold. The PKS/mFAS DH domain maps to 1292-1596 (QRVLETSGDN…FQGLARKILD (305 aa)). Catalysis depends on His1324, which acts as the Proton acceptor; for dehydratase activity. Positions 1451–1596 (AHRMKRGMVY…FQGLARKILD (146 aa)) are C-terminal hotdog fold. The active-site Proton donor; for dehydratase activity is the Asp1509. Residues 1640–1714 (PSMATRALAI…DFKHLLAQMG (75 aa)) form the Carrier 1 domain. Ser1674 is modified (O-(pantetheine 4'-phosphoryl)serine). Residues 1712–1758 (QMGPGESSDGSSSEGDMSSAASSTDLSSPNTSGLPTPANEKSMTHGL) are disordered. Low complexity predominate over residues 1713-1739 (MGPGESSDGSSSEGDMSSAASSTDLSS). Positions 1740–1758 (PNTSGLPTPANEKSMTHGL) are enriched in polar residues. The Carrier 2 domain occupies 1759–1836 (QGQNDSMRQI…DIETTLDLKP (78 aa)). The residue at position 1796 (Ser1796) is an O-(pantetheine 4'-phosphoryl)serine. The tract at residues 1863–2135 (TQHPPATSIL…ELARFIANSM (273 aa)) is claisen cyclase domain. Ser1953 acts as the For Claisen cyclase activity in catalysis.

It carries out the reaction 6 malonyl-CoA + acetyl-CoA + 6 H(+) = naphtopyrone YWA1 + 6 CO2 + 7 CoA + H2O. Its pathway is pigment biosynthesis. The protein operates within polyketide biosynthesis; heptaketide naphthopyrone YWA1 biosynthesis. Functionally, non-reducing polyketide synthase involved in the biosynthesis of a yellow conidial pigment. Probably forms the heptaketide naphthopyrene YWA1 via condensation of acetate units. The sequence is that of Conidial yellow pigment biosynthesis polyketide synthase melA from Penicillium expansum (Blue mold rot fungus).